We begin with the raw amino-acid sequence, 376 residues long: Glucose-1-phosphate adenylyltransferase (376 aa).

Residues Tyr101, Gly166, 181 to 182 (EK), and Ser192 contribute to the alpha-D-glucose 1-phosphate site.

This sequence belongs to the bacterial/plant glucose-1-phosphate adenylyltransferase family. As to quaternary structure, homotetramer.

The catalysed reaction is alpha-D-glucose 1-phosphate + ATP + H(+) = ADP-alpha-D-glucose + diphosphate. The protein operates within glycan biosynthesis; glycogen biosynthesis. In terms of biological role, involved in the biosynthesis of ADP-glucose, a building block required for the elongation reactions to produce glycogen. Catalyzes the reaction between ATP and alpha-D-glucose 1-phosphate (G1P) to produce pyrophosphate and ADP-Glc. This Bacillus cereus (strain ATCC 10987 / NRS 248) protein is Glucose-1-phosphate adenylyltransferase.